The primary structure comprises 185 residues: Ribosome-recycling factor (185 aa).

Belongs to the RRF family.

It localises to the cytoplasm. Responsible for the release of ribosomes from messenger RNA at the termination of protein biosynthesis. May increase the efficiency of translation by recycling ribosomes from one round of translation to another. The polypeptide is Ribosome-recycling factor (Lacticaseibacillus casei (strain BL23) (Lactobacillus casei)).